We begin with the raw amino-acid sequence, 242 residues long: Biosynthetic peptidoglycan transglycosylase (242 aa).

A helical membrane pass occupies residues 19–39; sequence ILAALAVFWGGGIALFSVVPV.

It belongs to the glycosyltransferase 51 family.

The protein resides in the cell inner membrane. The catalysed reaction is [GlcNAc-(1-&gt;4)-Mur2Ac(oyl-L-Ala-gamma-D-Glu-L-Lys-D-Ala-D-Ala)](n)-di-trans,octa-cis-undecaprenyl diphosphate + beta-D-GlcNAc-(1-&gt;4)-Mur2Ac(oyl-L-Ala-gamma-D-Glu-L-Lys-D-Ala-D-Ala)-di-trans,octa-cis-undecaprenyl diphosphate = [GlcNAc-(1-&gt;4)-Mur2Ac(oyl-L-Ala-gamma-D-Glu-L-Lys-D-Ala-D-Ala)](n+1)-di-trans,octa-cis-undecaprenyl diphosphate + di-trans,octa-cis-undecaprenyl diphosphate + H(+). It functions in the pathway cell wall biogenesis; peptidoglycan biosynthesis. Its function is as follows. Peptidoglycan polymerase that catalyzes glycan chain elongation from lipid-linked precursors. This chain is Biosynthetic peptidoglycan transglycosylase, found in Salmonella paratyphi B (strain ATCC BAA-1250 / SPB7).